The chain runs to 341 residues: Phosphoribosylformylglycinamidine cyclo-ligase (341 aa).

The protein belongs to the AIR synthase family.

It is found in the cytoplasm. The enzyme catalyses 2-formamido-N(1)-(5-O-phospho-beta-D-ribosyl)acetamidine + ATP = 5-amino-1-(5-phospho-beta-D-ribosyl)imidazole + ADP + phosphate + H(+). It functions in the pathway purine metabolism; IMP biosynthesis via de novo pathway; 5-amino-1-(5-phospho-D-ribosyl)imidazole from N(2)-formyl-N(1)-(5-phospho-D-ribosyl)glycinamide: step 2/2. The chain is Phosphoribosylformylglycinamidine cyclo-ligase from Xanthomonas oryzae pv. oryzae (strain MAFF 311018).